A 458-amino-acid polypeptide reads, in one-letter code: (R)-6-hydroxynicotine oxidase (458 aa).

The region spanning 33–204 (RHLQRPSLIA…TEVEVQLYEL (172 aa)) is the FAD-binding PCMH-type domain. Residues 67 to 73 (RSGGHNP), 129 to 130 (HP), 134 to 137 (FCGL), G144, T195, N413, and N450 each bind FAD. H71 is subject to Pros-8alpha-FAD histidine.

This sequence belongs to the oxygen-dependent FAD-linked oxidoreductase family. In terms of assembly, monomer. Requires FAD as cofactor.

It is found in the cytoplasm. It catalyses the reaction (R)-6-hydroxynicotine + O2 + H2O = 6-hydroxypseudooxynicotine + H2O2. It carries out the reaction (R)-6-hydroxynicotine + O2 = 6-hydroxy-N-methylmyosmine + H2O2. The protein operates within alkaloid degradation; nicotine degradation; 6-hydroxypseudooxynicotine from nicotine (R-isomer route): step 2/2. Its activity is regulated as follows. Inhibited by (S)-6-hydroxynicotine. Inhibited by high concentrations of phenanthroline. Functionally, involved in the degradation of D-nicotine. Catalyzes the oxidation of (R)-6-hydroxynicotine (6-hydroxy-D-nicotine) to 6-hydroxypseudooxynicotine. Oxidation of the pyrrolidine ring of (R)-6-hydroxynicotine leads to the formation of the optically inactive 6-hydroxy-N-methylmyosmine, which hydrolyzes spontaneously to 6-hydroxypseudooxynicotine. Acts with absolute stereospecificity on the D-form of 6-hydroxynicotine. Shows lower activity with (R)-6-hydroxynornicotine, and weak activity with (R)-4-(1-methylpyrrolidine-2-yl)phenol, (R)-6-chloronicotine and (R)-nicotine. This chain is (R)-6-hydroxynicotine oxidase, found in Paenarthrobacter nicotinovorans (Arthrobacter nicotinovorans).